The primary structure comprises 295 residues: Methionine aminopeptidase (295 aa).

H62 lines the substrate pocket. Residues D82, D93, and H153 each contribute to the a divalent metal cation site. H161 provides a ligand contact to substrate. The a divalent metal cation site is built by E187 and E280.

In terms of assembly, monomer. It depends on Co(2+) as a cofactor. The cofactor is Zn(2+). Mn(2+) serves as cofactor. Requires Fe(2+) as cofactor.

The enzyme catalyses Release of N-terminal amino acids, preferentially methionine, from peptides and arylamides.. Its function is as follows. Removes the N-terminal methionine from nascent proteins. The N-terminal methionine is often cleaved when the second residue in the primary sequence is small and uncharged (Met-Ala-, Cys, Gly, Pro, Ser, Thr, or Val). This is Methionine aminopeptidase from Pyrococcus furiosus (strain ATCC 43587 / DSM 3638 / JCM 8422 / Vc1).